The chain runs to 340 residues: VPNAQPALEGRTSFPEDTVVTYKCEESFMKIPGKKDSVICLKGSQWSDIEEFCNRSCEVPTRLNFASLKQPYITQNYFPVGTTVEYVCRPGYRRELSLSTKLTCLQNLTWSTAVEFCKKKSCPNPGEIRNGQIDVSNGILFGATISFSCNTGYKLFGPTSSLCLISGSSVQWSDPLPECREIYCPAPPQIDNGIIQGKRDHYGYRQSITYACNKGYTMIGEHSIYCTVNDDEGEWSGPPPECRGKSLTSKVPPTVQKPTTVNVPTTEVSPTSQKTTTKTTTPNAQATRSTPVSRTTKHFHETTPNKGSGTTSGTTSLLSGHKCFTLTGLLGTLVTMGLLT.

Sushi domains are found at residues 1 to 55 (VPNA…FCNR), 56 to 119 (SCEV…FCKK), 120 to 181 (KSCP…ECRE), and 182 to 244 (IYCP…ECRG). A disulfide bridge links Cys-24 with Cys-53. Asn-54 carries an N-linked (GlcNAc...) asparagine glycan. Cystine bridges form between Cys-57/Cys-104, Cys-88/Cys-117, Cys-122/Cys-163, Cys-149/Cys-179, Cys-184/Cys-226, and Cys-212/Cys-242. N-linked (GlcNAc...) asparagine glycosylation occurs at Asn-107. The interval 235-317 (WSGPPPECRG…SGTTSGTTSL (83 aa)) is disordered. Positions 246–268 (SLTSKVPPTVQKPTTVNVPTTEV) are enriched in polar residues. Low complexity-rich tracts occupy residues 269–287 (SPTSQKTTTKTTTPNAQAT) and 307–317 (GSGTTSGTTSL). Residue Ser-312 is the site of GPI-anchor amidated serine attachment. The propeptide at 313 to 340 (GTTSLLSGHKCFTLTGLLGTLVTMGLLT) is removed in mature form.

This sequence belongs to the receptors of complement activation (RCA) family. As to quaternary structure, monomer (major form) and non-disulfide-linked, covalent homodimer (minor form). Interacts with ADGRE5. The Ser/Thr-rich domain is heavily O-glycosylated.

The protein localises to the cell membrane. This protein recognizes C4b and C3b fragments that condense with cell-surface hydroxyl or amino groups when nascent C4b and C3b are locally generated during C4 and c3 activation. Interaction of daf with cell-associated C4b and C3b polypeptides interferes with their ability to catalyze the conversion of C2 and factor B to enzymatically active C2a and Bb and thereby prevents the formation of C4b2a and C3bBb, the amplification convertases of the complement cascade. Inhibits complement activation by destabilizing and preventing the formation of C3 and C5 convertases, which prevents complement damage. This chain is Complement decay-accelerating factor (CD55), found in Pongo pygmaeus (Bornean orangutan).